The sequence spans 230 residues: Uracil-DNA glycosylase (230 aa).

Aspartate 72 acts as the Proton acceptor in catalysis.

Belongs to the uracil-DNA glycosylase (UDG) superfamily. UNG family.

The protein localises to the cytoplasm. The enzyme catalyses Hydrolyzes single-stranded DNA or mismatched double-stranded DNA and polynucleotides, releasing free uracil.. Its function is as follows. Excises uracil residues from the DNA which can arise as a result of misincorporation of dUMP residues by DNA polymerase or due to deamination of cytosine. The polypeptide is Uracil-DNA glycosylase (Wolinella succinogenes (strain ATCC 29543 / DSM 1740 / CCUG 13145 / JCM 31913 / LMG 7466 / NCTC 11488 / FDC 602W) (Vibrio succinogenes)).